The following is a 91-amino-acid chain: Small ribosomal subunit protein uS19 (91 aa).

This sequence belongs to the universal ribosomal protein uS19 family.

Functionally, protein S19 forms a complex with S13 that binds strongly to the 16S ribosomal RNA. This Prochlorococcus marinus (strain SARG / CCMP1375 / SS120) protein is Small ribosomal subunit protein uS19.